A 383-amino-acid polypeptide reads, in one-letter code: L-lactate dehydrogenase (383 aa).

Residues 1 to 380 enclose the FMN hydroxy acid dehydrogenase domain; the sequence is MIIASTFDYR…TCESLVNTDA (380 aa). Tyr-24 contributes to the substrate binding site. FMN contacts are provided by Ser-106 and Gln-127. Tyr-129 is a substrate binding site. Thr-155 lines the FMN pocket. Residue Arg-164 participates in substrate binding. FMN is bound at residue Lys-251. The Proton acceptor role is filled by His-275. Residue Arg-278 participates in substrate binding. 306-330 provides a ligand contact to FMN; the sequence is DSGVRSGLDVVRMIAQGADAVMIGR.

The protein belongs to the FMN-dependent alpha-hydroxy acid dehydrogenase family. It depends on FMN as a cofactor.

Its subcellular location is the cell inner membrane. It catalyses the reaction (S)-lactate + A = pyruvate + AH2. Functionally, catalyzes the conversion of L-lactate to pyruvate. Is coupled to the respiratory chain. This chain is L-lactate dehydrogenase, found in Bartonella tribocorum (strain CIP 105476 / IBS 506).